A 256-amino-acid chain; its full sequence is MAPKKGVKVASKKKPEKVTNPLFERRPKQFGIGGALPPKKDLSRYIKWPKSIRLQRQKRILKQRLKVPPALNQFTKTLDKNLATSLFKILLKYRPEDKAAKKERLLNKAQAEAEGKPAESKKPIVVKYGLNHVTYLIEQNKAQLVVIAHDVDPIELVVWLPALCRKMEVPYCIVKGKSRLGAVVHQKTAAALCLTTVKNEDKLEFSKILEAIKANFNDKYEEYRKKWGGGIMGSKSQAKTKAKERVIAKEAAQRMN.

Positions 1–15 (MAPKKGVKVASKKKP) are enriched in basic residues. The interval 1–20 (MAPKKGVKVASKKKPEKVTN) is disordered.

It belongs to the eukaryotic ribosomal protein eL8 family.

This is Large ribosomal subunit protein eL8y (RPL7AB) from Arabidopsis thaliana (Mouse-ear cress).